A 418-amino-acid chain; its full sequence is Putative ion-transport protein YfeO (418 aa).

Transmembrane regions (helical) follow at residues 10–30 (LLLS…LIVV), 54–74 (DSPF…GLVI), 99–119 (ALPG…SLGP), 120–140 (EHPI…RLLP), 149–169 (ILAS…AALI), 186–206 (LFAP…FFHP), 223–243 (ILSG…AVWC), 258–278 (VLML…AGPV), 300–320 (DYFL…ASGF), 322–342 (GGRI…LHEH), 343–363 (VPAV…VLVV), and 371–391 (LFMA…CIVM).

This sequence belongs to the chloride channel (TC 2.A.49) family.

It is found in the cell membrane. The chain is Putative ion-transport protein YfeO from Escherichia coli O7:K1 (strain IAI39 / ExPEC).